The chain runs to 451 residues: Enolase (451 aa).

Residue Q163 coordinates (2R)-2-phosphoglycerate. E205 serves as the catalytic Proton donor. Positions 258, 308, and 335 each coordinate Mg(2+). Positions 360, 389, 390, and 411 each coordinate (2R)-2-phosphoglycerate. Residue K360 is the Proton acceptor of the active site.

It belongs to the enolase family. Mg(2+) serves as cofactor.

The protein localises to the cytoplasm. It is found in the secreted. Its subcellular location is the cell surface. The catalysed reaction is (2R)-2-phosphoglycerate = phosphoenolpyruvate + H2O. Its pathway is carbohydrate degradation; glycolysis; pyruvate from D-glyceraldehyde 3-phosphate: step 4/5. Functionally, catalyzes the reversible conversion of 2-phosphoglycerate (2-PG) into phosphoenolpyruvate (PEP). It is essential for the degradation of carbohydrates via glycolysis. This is Enolase from Mycoplasma capricolum subsp. capricolum (strain California kid / ATCC 27343 / NCTC 10154).